The following is a 369-amino-acid chain: Aminomethyltransferase (369 aa).

Belongs to the GcvT family. As to quaternary structure, the glycine cleavage system is composed of four proteins: P, T, L and H.

It catalyses the reaction N(6)-[(R)-S(8)-aminomethyldihydrolipoyl]-L-lysyl-[protein] + (6S)-5,6,7,8-tetrahydrofolate = N(6)-[(R)-dihydrolipoyl]-L-lysyl-[protein] + (6R)-5,10-methylene-5,6,7,8-tetrahydrofolate + NH4(+). Its function is as follows. The glycine cleavage system catalyzes the degradation of glycine. This chain is Aminomethyltransferase, found in Xanthomonas oryzae pv. oryzae (strain MAFF 311018).